A 62-amino-acid polypeptide reads, in one-letter code: Photosystem II reaction center protein K (62 aa).

The propeptide occupies 1-25 (MPNILSLTCICFNSVLYPTTSFFFA). Residues 33-53 (IFNPIVDVMPVIPLFFFLLAF) traverse the membrane as a helical segment.

Belongs to the PsbK family. As to quaternary structure, PSII is composed of 1 copy each of membrane proteins PsbA, PsbB, PsbC, PsbD, PsbE, PsbF, PsbH, PsbI, PsbJ, PsbK, PsbL, PsbM, PsbT, PsbX, PsbY, PsbZ, Psb30/Ycf12, at least 3 peripheral proteins of the oxygen-evolving complex and a large number of cofactors. It forms dimeric complexes.

The protein localises to the plastid. Its subcellular location is the chloroplast thylakoid membrane. In terms of biological role, one of the components of the core complex of photosystem II (PSII). PSII is a light-driven water:plastoquinone oxidoreductase that uses light energy to abstract electrons from H(2)O, generating O(2) and a proton gradient subsequently used for ATP formation. It consists of a core antenna complex that captures photons, and an electron transfer chain that converts photonic excitation into a charge separation. This Agrostis stolonifera (Creeping bentgrass) protein is Photosystem II reaction center protein K.